The sequence spans 598 residues: Membrane protein insertase YidC (598 aa).

Residues 7 to 27 form a helical membrane-spanning segment; it reads NYFIAIALSVLIVLGWQFLYM. Residues 37–76 are disordered; the sequence is AQEAQKAQQQTEQVQQPAAGGQTPAQTSGAAPSGQAAATA. The span at 40–76 shows a compositional bias: low complexity; the sequence is AQKAQQQTEQVQQPAAGGQTPAQTSGAAPSGQAAATA. 4 helical membrane passes run 377–397, 447–467, 492–512, and 538–558; these read FGVA…PLAS, WPVA…YITI, LFGL…WPLI, and WMPL…VIYW.

The protein belongs to the OXA1/ALB3/YidC family. Type 1 subfamily. Interacts with the Sec translocase complex via SecD. Specifically interacts with transmembrane segments of nascent integral membrane proteins during membrane integration.

The protein localises to the cell inner membrane. Its function is as follows. Required for the insertion and/or proper folding and/or complex formation of integral membrane proteins into the membrane. Involved in integration of membrane proteins that insert both dependently and independently of the Sec translocase complex, as well as at least some lipoproteins. Aids folding of multispanning membrane proteins. This is Membrane protein insertase YidC from Rhizobium johnstonii (strain DSM 114642 / LMG 32736 / 3841) (Rhizobium leguminosarum bv. viciae).